Here is a 99-residue protein sequence, read N- to C-terminus: Acylphosphatase-1 (99 aa).

In terms of domain architecture, Acylphosphatase-like spans 9-99 (SVDYEVFGKV…LEHSTFSICK (91 aa)). Residues Arg24 and Asn42 contribute to the active site.

It belongs to the acylphosphatase family.

The enzyme catalyses an acyl phosphate + H2O = a carboxylate + phosphate + H(+). This is Acylphosphatase-1 (acyp1) from Xenopus laevis (African clawed frog).